The primary structure comprises 360 residues: Proline-rich protein 11 (360 aa).

2 disordered regions span residues 20–43 and 174–201; these read KKKE…SPER and PPTL…PPLA. Position 33 is a phosphothreonine (T33). S40 carries the phosphoserine modification. Residues 175–201 are compositionally biased toward pro residues; sequence PTLPQPASHFPPPPPPPPLPPPPPPLA. The Phosphodegron signature appears at 285–291; the sequence is LITPGKS. T287 bears the Phosphothreonine mark. A Phosphoserine modification is found at S291. A D-box motif is present at residues 296–304; the sequence is RKLLRKVDV. The KEN box motif lies at 316–318; that stretch reads KEN. Positions 325-330 match the Phosphodegron motif; it reads LTPVMT. The segment at 340–360 is disordered; the sequence is AHPRSPTPTLPLSTSSFDEQN. S344 is subject to Phosphoserine. T346 and T348 each carry phosphothreonine. Positions 349–360 are enriched in low complexity; sequence LPLSTSSFDEQN.

In terms of processing, ubiquitinated. Rapidly degraded by the proteasome; degradation may involve FBXW7-specific phosphorylated phosphodegron motifs. As to expression, ubiquitously expressed.

Its subcellular location is the cytoplasm. It localises to the nucleus. Functionally, plays a critical role in cell cycle progression. This is Proline-rich protein 11 (PRR11) from Homo sapiens (Human).